A 209-amino-acid polypeptide reads, in one-letter code: Redox-sensing transcriptional repressor Rex (209 aa).

The segment at residues 16–55 (LYYRFIQNLSLSGKQRVSSAELSEAVKVDSATIRRDFSYF) is a DNA-binding region (H-T-H motif). 90–95 (GVGNLG) serves as a coordination point for NAD(+).

The protein belongs to the transcriptional regulatory Rex family. Homodimer.

The protein resides in the cytoplasm. In terms of biological role, modulates transcription in response to changes in cellular NADH/NAD(+) redox state. This Bacillus cytotoxicus (strain DSM 22905 / CIP 110041 / 391-98 / NVH 391-98) protein is Redox-sensing transcriptional repressor Rex.